A 1520-amino-acid chain; its full sequence is Integrator complex subunit 3 homolog (1520 aa).

Disordered regions lie at residues 1 to 23 (MMNQ…QQLT), 523 to 671 (QLHS…NSRV), 689 to 801 (VISQ…SPST), 813 to 922 (DEPP…QNIK), 1116 to 1177 (FSNS…NITN), and 1489 to 1520 (QSSN…FRKE). 2 stretches are compositionally biased toward low complexity: residues 527–549 (QQQQ…QQPP) and 557–595 (QPIN…QQQP). The span at 596–612 (PQQPPPQQQPQQQPPQQ) shows a compositional bias: pro residues. Positions 613–625 (QPQQQPQQQQPQL) are enriched in low complexity. Positions 626–639 (NISTGNLPNIQQPM) are enriched in polar residues. Low complexity-rich tracts occupy residues 642-669 (SPPL…TNNS), 694-717 (PQSQ…SPPL), and 725-735 (QQQPSQQLPSQ). The span at 736-752 (IVKNSPPNLSMTNENIS) shows a compositional bias: polar residues. Residues 768–789 (SPLINSSNSNITTPNPDSQSQI) show a composition bias toward low complexity. Over residues 819-828 (SKSSPTQSNI) the composition is skewed to polar residues. Residues 837–882 (PPQTTISSSSPLLQPQTQPQPQTQPQPQTLQQSTTPSLSSSSTPTI) are compositionally biased toward low complexity. The span at 898–918 (QPPPPPPSSQPLQPPPPPPPS) shows a compositional bias: pro residues. 2 stretches are compositionally biased toward low complexity: residues 1116-1130 (FSNS…NNNN) and 1137-1177 (QQQQ…NITN). Over residues 1489 to 1504 (QSSNIKNDNNPTLSKH) the composition is skewed to polar residues.

This sequence belongs to the Integrator subunit 3 family. Component of the Integrator complex. The core complex associates with protein phosphatase 2A subunits, to form the Integrator-PP2A (INTAC) complex. Component of the SOSS complex.

It is found in the nucleus. It localises to the cytoplasm. Component of the integrator complex, a multiprotein complex that terminates RNA polymerase II (Pol II) transcription in the promoter-proximal region of genes. The integrator complex provides a quality checkpoint during transcription elongation by driving premature transcription termination of transcripts that are unfavorably configured for transcriptional elongation: the complex terminates transcription by (1) catalyzing dephosphorylation of the C-terminal domain (CTD) of Pol II subunit polr2a, (2) degrading the exiting nascent RNA transcript via endonuclease activity and (3) promoting the release of Pol II from bound DNA. The integrator complex is also involved in terminating the synthesis of non-coding Pol II transcripts, such as enhancer RNAs (eRNAs), small nuclear RNAs (snRNAs), telomerase RNAs and long non-coding RNAs (lncRNAs). Its function is as follows. Component of the SOSS complex, a multiprotein complex that functions downstream of the MRN complex to promote DNA repair and G2/M checkpoint. The SOSS complex associates with single-stranded DNA at DNA lesions and influences diverse endpoints in the cellular DNA damage response including cell-cycle checkpoint activation, recombinational repair and maintenance of genomic stability. The SOSS complex is required for efficient homologous recombination-dependent repair of double-strand breaks (DSBs) and ATM-dependent signaling pathways. In the SOSS complex, it is required for the assembly of the complex and for stabilization of the complex at DNA damage sites. The protein is Integrator complex subunit 3 homolog (ints3) of Dictyostelium discoideum (Social amoeba).